The primary structure comprises 146 residues: 3-dehydroquinate dehydratase (146 aa).

Tyr22 (proton acceptor) is an active-site residue. Substrate-binding residues include Asn73, His79, and Asp86. Residue His99 is the Proton donor of the active site. Residues 100 to 101 (LS) and Arg110 each bind substrate.

The protein belongs to the type-II 3-dehydroquinase family. Homododecamer.

It carries out the reaction 3-dehydroquinate = 3-dehydroshikimate + H2O. It participates in metabolic intermediate biosynthesis; chorismate biosynthesis; chorismate from D-erythrose 4-phosphate and phosphoenolpyruvate: step 3/7. Catalyzes a trans-dehydration via an enolate intermediate. In Parasynechococcus marenigrum (strain WH8102), this protein is 3-dehydroquinate dehydratase.